A 352-amino-acid chain; its full sequence is UDP-3-O-acylglucosamine N-acyltransferase (352 aa).

His-246 (proton acceptor) is an active-site residue.

It belongs to the transferase hexapeptide repeat family. LpxD subfamily. As to quaternary structure, homotrimer.

It catalyses the reaction a UDP-3-O-[(3R)-3-hydroxyacyl]-alpha-D-glucosamine + a (3R)-hydroxyacyl-[ACP] = a UDP-2-N,3-O-bis[(3R)-3-hydroxyacyl]-alpha-D-glucosamine + holo-[ACP] + H(+). Its pathway is bacterial outer membrane biogenesis; LPS lipid A biosynthesis. Catalyzes the N-acylation of UDP-3-O-acylglucosamine using 3-hydroxyacyl-ACP as the acyl donor. Is involved in the biosynthesis of lipid A, a phosphorylated glycolipid that anchors the lipopolysaccharide to the outer membrane of the cell. In Chlorobium luteolum (strain DSM 273 / BCRC 81028 / 2530) (Pelodictyon luteolum), this protein is UDP-3-O-acylglucosamine N-acyltransferase.